A 499-amino-acid chain; its full sequence is Ent-kaurenoic acid oxidase 1 (499 aa).

Residues 5-25 (AWWAVAAVVAALAVVALDAAV) form a helical membrane-spanning segment. Position 443 (cysteine 443) interacts with heme.

It belongs to the cytochrome P450 family. The cofactor is heme.

The protein localises to the endoplasmic reticulum membrane. It carries out the reaction ent-kaur-16-en-19-oate + 3 reduced [NADPH--hemoprotein reductase] + 3 O2 = gibberellin A12 + 3 oxidized [NADPH--hemoprotein reductase] + 4 H2O + 4 H(+). The enzyme catalyses ent-kaur-16-en-19-oate + reduced [NADPH--hemoprotein reductase] + O2 = ent-7alpha-hydroxykaur-16-en-19-oate + oxidized [NADPH--hemoprotein reductase] + H2O + H(+). The catalysed reaction is ent-7alpha-hydroxykaur-16-en-19-oate + reduced [NADPH--hemoprotein reductase] + O2 = gibberellin A12 aldehyde + oxidized [NADPH--hemoprotein reductase] + 2 H2O + H(+). It catalyses the reaction gibberellin A12 aldehyde + reduced [NADPH--hemoprotein reductase] + O2 = gibberellin A12 + oxidized [NADPH--hemoprotein reductase] + H2O + 2 H(+). It functions in the pathway plant hormone biosynthesis; gibberellin biosynthesis. Functionally, catalyzes three successive oxidations of ent-kaurenoic acid giving gibberellin 12 (GA12), a key step in gibberellins (GAs) biosynthesis. GAs, which are involved many processes, including stem elongation, play a central role in plant development. This Hordeum vulgare (Barley) protein is Ent-kaurenoic acid oxidase 1.